The primary structure comprises 393 residues: PGA synthase CapB (393 aa).

It depends on Mn(2+) as a cofactor.

In terms of biological role, catalyzes the biosynthesis of PGA (gamma-polyglutamic acid) from L-glutamate. Both the 44-kDa and the 33-kDa forms are required for PGA synthesis. The protein is PGA synthase CapB (capB) of Bacillus subtilis (strain 168).